A 248-amino-acid polypeptide reads, in one-letter code: 3-deoxy-manno-octulosonate cytidylyltransferase (248 aa).

It belongs to the KdsB family.

The protein localises to the cytoplasm. It carries out the reaction 3-deoxy-alpha-D-manno-oct-2-ulosonate + CTP = CMP-3-deoxy-beta-D-manno-octulosonate + diphosphate. The protein operates within nucleotide-sugar biosynthesis; CMP-3-deoxy-D-manno-octulosonate biosynthesis; CMP-3-deoxy-D-manno-octulosonate from 3-deoxy-D-manno-octulosonate and CTP: step 1/1. It functions in the pathway bacterial outer membrane biogenesis; lipopolysaccharide biosynthesis. Activates KDO (a required 8-carbon sugar) for incorporation into bacterial lipopolysaccharide in Gram-negative bacteria. In Syntrophus aciditrophicus (strain SB), this protein is 3-deoxy-manno-octulosonate cytidylyltransferase.